The following is a 479-amino-acid chain: MSIVVKNNIHWVGQRDWEVRDFHGTEYKTLRGSSYNSYLIREEKNVLIDTVDHKFSREFVQNLRNEIDLADIDYIVINHAEEDHAGALTELMAQIPDTPIYCTANAIDSINGHHHHPEWNFNVVKTGDTLDIGNGKQLIFVETPMLHWPDSMMTYLTGDAVLFSNDAFGQHYCDEHLFNDEVDQTELFEQCQRYYANILTPFSRLVTPKITEILGFNLPVDMIATSHGVVWRDNPTQIVELYLKWAADYQEDRITIFYDTMSNNTRMMADAIAQGIAETDPRVAVKIFNVARSDKNEILTNVFRSKGVLVGTSTMNNVMMPKIAGLVEEMTGLRFRNKRASAFGSHGWSGGAVDRLSTRLQDAGFEMSLSLKAKWRPDQDALELCREHGREIARQWALAPLPQSTVNKVVKEETSATTTADLGPRMQCSVCQWIYDPAKGEPMQDVAPGTPWSEVPDNFLCPECSLGKDVFEELASEAK.

The interval 30-210 is zinc metallo-hydrolase; it reads LRGSSYNSYL…PFSRLVTPKI (181 aa). 6 residues coordinate Fe cation: His-79, Glu-81, Asp-83, His-147, Asp-166, and His-227. A Flavodoxin-like domain is found at 254 to 393; that stretch reads ITIFYDTMSN…LCREHGREIA (140 aa). Residues 260-264 and 342-369 each bind FMN; these read TMSNN and AFGS…EMSL. One can recognise a Rubredoxin-like domain in the interval 423–474; it reads GPRMQCSVCQWIYDPAKGEPMQDVAPGTPWSEVPDNFLCPECSLGKDVFEEL. The Fe cation site is built by Cys-428, Cys-431, Cys-461, and Cys-464.

In the N-terminal section; belongs to the zinc metallo-hydrolase group 3 family. Homotetramer. Requires Fe cation as cofactor. The cofactor is FMN.

It localises to the cytoplasm. It participates in nitrogen metabolism; nitric oxide reduction. Its function is as follows. Anaerobic nitric oxide reductase; uses NADH to detoxify nitric oxide (NO), protecting several 4Fe-4S NO-sensitive enzymes. Has at least 2 reductase partners, only one of which (NorW, flavorubredoxin reductase) has been identified. NO probably binds to the di-iron center; electrons enter from the NorW at rubredoxin and are transferred sequentially to the FMN center and the di-iron center. Also able to function as an aerobic oxygen reductase. The protein is Anaerobic nitric oxide reductase flavorubredoxin of Shigella boydii serotype 4 (strain Sb227).